We begin with the raw amino-acid sequence, 121 residues long: Non-structural protein 8 (121 aa).

The signal sequence occupies residues 1–15; the sequence is MKLLIVFGLLTSVYC. Positions 19 to 121 constitute an SARS ORF8 Ig-like domain; it reads ECSIQECCEN…HDVRVVLDFV (103 aa). Cystine bridges form between Cys-25/Cys-90, Cys-37/Cys-102, and Cys-61/Cys-83.

The chain is Non-structural protein 8 from Bat coronavirus Rp3/2004 (BtCoV/Rp3/2004).